Reading from the N-terminus, the 1071-residue chain is Methionine S-methyltransferase (1071 aa).

An N-acetylalanine modification is found at A2.

This sequence belongs to the class I-like SAM-binding methyltransferase superfamily. As to quaternary structure, homotetramer. Expressed in roots, rosette leaves and cauline leaves. Expressed at a lower level in developing seeds.

It localises to the cytoplasm. The catalysed reaction is L-methionine + S-adenosyl-L-methionine = S-methyl-L-methionine + S-adenosyl-L-homocysteine. Catalyzes the S-methylmethionine (SMM) biosynthesis from adenosyl-L-homocysteine (AdoMet) and methionine. SMM biosynthesis (by MMT1) and degradation (by HMT-1, HMT-2 and HMT-3) constitute the SMM cycle in plants, which is probably required to achieve short term control of AdoMet level. Also able to catalyze the selenium-methylmethionine (SeMM) from AdoMet and selenium-methionine (SeMet). May play a role in phoem sulfur transport; such function is however not essential. This Arabidopsis thaliana (Mouse-ear cress) protein is Methionine S-methyltransferase (MMT1).